The following is a 678-amino-acid chain: UvrABC system protein C (678 aa).

A compositionally biased stretch (basic residues) spans 1–13; sequence MKKNISYGKHKTF. The tract at residues 1-25 is disordered; it reads MKKNISYGKHKTFPSKLNGLEKQHS. The GIY-YIG domain occupies 69–147; sequence HKPGVYRMFD…IKRLHPRFNV (79 aa). Positions 257-292 constitute a UVR domain; that stretch reads QSVKNDMIQAMHKAAEDLDFEQAAVYRDRLSALSHI.

The protein belongs to the UvrC family. Interacts with UvrB in an incision complex.

Its subcellular location is the cytoplasm. The UvrABC repair system catalyzes the recognition and processing of DNA lesions. UvrC both incises the 5' and 3' sides of the lesion. The N-terminal half is responsible for the 3' incision and the C-terminal half is responsible for the 5' incision. The protein is UvrABC system protein C of Bartonella quintana (strain Toulouse) (Rochalimaea quintana).